A 545-amino-acid chain; its full sequence is Chaperonin GroEL 1 (545 aa).

ATP is bound by residues 30-33 (TLGP), lysine 51, 87-91 (DGTTT), glycine 415, and aspartate 495.

This sequence belongs to the chaperonin (HSP60) family. As to quaternary structure, forms a cylinder of 14 subunits composed of two heptameric rings stacked back-to-back. Interacts with the co-chaperonin GroES.

Its subcellular location is the cytoplasm. It catalyses the reaction ATP + H2O + a folded polypeptide = ADP + phosphate + an unfolded polypeptide.. Together with its co-chaperonin GroES, plays an essential role in assisting protein folding. The GroEL-GroES system forms a nano-cage that allows encapsulation of the non-native substrate proteins and provides a physical environment optimized to promote and accelerate protein folding. This is Chaperonin GroEL 1 from Rhizobium meliloti (strain 1021) (Ensifer meliloti).